The primary structure comprises 208 residues: UPF0301 protein MAB_4928c (208 aa).

Belongs to the UPF0301 (AlgH) family.

The protein is UPF0301 protein MAB_4928c of Mycobacteroides abscessus (strain ATCC 19977 / DSM 44196 / CCUG 20993 / CIP 104536 / JCM 13569 / NCTC 13031 / TMC 1543 / L948) (Mycobacterium abscessus).